A 132-amino-acid chain; its full sequence is Small ribosomal subunit protein uS8 (132 aa).

It belongs to the universal ribosomal protein uS8 family. Part of the 30S ribosomal subunit. Contacts proteins S5 and S12.

Its function is as follows. One of the primary rRNA binding proteins, it binds directly to 16S rRNA central domain where it helps coordinate assembly of the platform of the 30S subunit. The polypeptide is Small ribosomal subunit protein uS8 (Thermoanaerobacter pseudethanolicus (strain ATCC 33223 / 39E) (Clostridium thermohydrosulfuricum)).